Reading from the N-terminus, the 177-residue chain is CASP-like protein 4D1 (177 aa).

The Cytoplasmic segment spans residues 1–20 (MTAPTAPSMAAPPAPSMVSR). A helical transmembrane segment spans residues 21–41 (MTALFLRVLTFAFLMVSLVIM). Topologically, residues 42–66 (TTNTGTIEIGIDEFKVRSKDFYSYR) are extracellular. Residues 67–87 (YMLAAIAFGLTYTILQIALTL) traverse the membrane as a helical segment. Residues 88–107 (NHISKRNGAQTSGDGNLVFD) lie on the Cytoplasmic side of the membrane. A helical membrane pass occupies residues 108 to 128 (FYGDKVVSYILATGAAAAFGA). Topologically, residues 129–153 (TKELKTQLAGLGGDKFFNKGYASAS) are extracellular. A helical membrane pass occupies residues 154 to 174 (LLLLGFVCTAILSVFSSYALP). Topologically, residues 175–177 (KKV) are cytoplasmic.

Belongs to the Casparian strip membrane proteins (CASP) family. In terms of assembly, homodimer and heterodimers.

Its subcellular location is the cell membrane. The polypeptide is CASP-like protein 4D1 (Populus trichocarpa (Western balsam poplar)).